Here is a 47-residue protein sequence, read N- to C-terminus: IgA-inducing protein (47 aa).

Residues 1 to 24 (MKKRSVSGCNITILAVVFSHLSAG) form the signal peptide.

Expressed in Peyer patches, spleen, thymus, liver and mesenteric lymph node. Expressed at high levels by dendritic cells, and at lower levels by T-cells, monocytes and B-cells.

It is found in the secreted. Enhances IgA secretion from B-cells stimulated via CD40. This chain is IgA-inducing protein (IGIP), found in Bos taurus (Bovine).